Reading from the N-terminus, the 201-residue chain is Peptidyl-prolyl cis-trans isomerase CYP19-4 (201 aa).

A signal peptide spans 1–23 (MAKASFILLGTLFLFGAIASIQA). A PPIase cyclophilin-type domain is found at 35–198 (YFDVEIDGKS…SKVVIADSGE (164 aa)).

It belongs to the cyclophilin-type PPIase family. As to quaternary structure, interacts with EMB30/GNOM. In terms of tissue distribution, ubiquitous, mostly in aerial organs (at protein level).

The protein resides in the cytoplasm. Its subcellular location is the membrane. It localises to the endoplasmic reticulum. The protein localises to the secreted. It catalyses the reaction [protein]-peptidylproline (omega=180) = [protein]-peptidylproline (omega=0). With respect to regulation, binds cyclosporin A (CsA). CsA mediates some of its effects via an inhibitory action on PPIase. Its function is as follows. PPIases accelerate the folding of proteins. It catalyzes the cis-trans isomerization of proline imidic peptide bonds in oligopeptides. May be involved during embryogenesis and organ development by regulating the folding of EMB30/GNOM, and thus, by modulating its activity. The protein is Peptidyl-prolyl cis-trans isomerase CYP19-4 (CYP19-4) of Arabidopsis thaliana (Mouse-ear cress).